Here is a 249-residue protein sequence, read N- to C-terminus: Adapter protein MecA (249 aa).

This sequence belongs to the MecA family. Homodimer.

In terms of biological role, enables the recognition and targeting of unfolded and aggregated proteins to the ClpC protease or to other proteins involved in proteolysis. The sequence is that of Adapter protein MecA from Streptococcus thermophilus (strain CNRZ 1066).